Consider the following 213-residue polypeptide: ER lumen protein-retaining receptor (213 aa).

The Lumenal segment spans residues 1–2 (MN). Residues 3–21 (IFRITADLAHAVAIVILLL) traverse the membrane as a helical segment. The Cytoplasmic segment spans residues 22-35 (KIWKSRSCEGISGR). A helical membrane pass occupies residues 36-53 (SQILFAVTFFTRYLDLFT). Residues 54-61 (SFYSLYNT) lie on the Lumenal side of the membrane. A helical transmembrane segment spans residues 62-80 (VMKVLFLAGSIGTVYLMWV). Residues 81–96 (KFKATYDRNNDTFRIE) are Cytoplasmic-facing. Residues 97-110 (FLVIPSIILALIIN) form a helical membrane-spanning segment. Residues 111-117 (HEFMFME) lie on the Lumenal side of the membrane. A helical membrane pass occupies residues 118 to 137 (VMWTFSIYLEAVAIMPQLFM). At 138-149 (LSRTGNAETITA) the chain is on the cytoplasmic side. The chain crosses the membrane as a helical span at residues 150–168 (HYLFALGSYRFLYIFNWVY). Topologically, residues 169 to 178 (RYYTESFFDP) are lumenal. The chain crosses the membrane as a helical span at residues 179-199 (IAVVAGIVQTVLYADFFYLYI). Topologically, residues 200 to 213 (TRVIQSNRQFEMSA) are cytoplasmic.

This sequence belongs to the ERD2 family.

The protein resides in the endoplasmic reticulum membrane. Its function is as follows. Required for the retention of luminal endoplasmic reticulum proteins. Determines the specificity of the luminal ER protein retention system. Also required for normal vesicular traffic through the Golgi. The sequence is that of ER lumen protein-retaining receptor (erd-2.1) from Caenorhabditis briggsae.